We begin with the raw amino-acid sequence, 548 residues long: MDLFKIEANYIDIFNKEIYPASIAIANGHIASIEKINATLDEYVLPGFIDAHIHIESSFLVPSNFAHLVVAHGTVATISDPHEIANVNGIDGINFMINNSKKTEFKFFFGAPSCVPALSQEFETSGYVLNDKDIDELMKLDDIYYLAEVMDFKGVINKDIEIINKINSALKRNKVVDGHAPGLSPNLTLKYASSGISTDHECLTIEDARYKLSLGMKILIREGSAAKNFESLHPLISECSKKYCDSLMFCFDDAHPNDILNGHINLIVARAIKHGHDFFDVLKIACINPVLHYKIPVGLLRIGDPADFIITKDIKTFKINKTYINGKLVFNDGISLIPLINEIPINNFNCSKKSISDFKFSTKNKMIPVIKCISNQIITHKTMIDSNLLAPDFQSNIAEDILKIAIINRYKDNSKISIGFIKNFGIRNGAIGSTVAHDSHNIILVGSNDEYLCKAANTIIQNKGGLCALNNEKTIIMELPISGLMSTLSAERVASQYIKLNDFCKNVLGSRLDDPLMTLSFMSLTVVPHLKINDKGLFDVDSFCFVDY.

The protein belongs to the metallo-dependent hydrolases superfamily. Adenine deaminase family. Mn(2+) is required as a cofactor.

The catalysed reaction is adenine + H2O + H(+) = hypoxanthine + NH4(+). This chain is Adenine deaminase, found in Borreliella burgdorferi (strain ATCC 35210 / DSM 4680 / CIP 102532 / B31) (Borrelia burgdorferi).